Reading from the N-terminus, the 333-residue chain is Protein-methionine-sulfoxide reductase catalytic subunit MsrP (333 aa).

Positions 1-43 (MSKQRKLTEADVTPESVFYQRRKVLQALGITAASLALPHNAQA) form a signal peptide, tat-type signal. Residues asparagine 87, 90–91 (YE), cysteine 145, threonine 180, asparagine 232, arginine 237, and 248–250 (GIK) contribute to the Mo-molybdopterin site.

This sequence belongs to the MsrP family. As to quaternary structure, heterodimer of a catalytic subunit (MsrP) and a heme-binding subunit (MsrQ). Mo-molybdopterin is required as a cofactor. Post-translationally, predicted to be exported by the Tat system. The position of the signal peptide cleavage has not been experimentally proven.

It is found in the periplasm. The catalysed reaction is L-methionyl-[protein] + a quinone + H2O = L-methionyl-(S)-S-oxide-[protein] + a quinol. It catalyses the reaction L-methionyl-[protein] + a quinone + H2O = L-methionyl-(R)-S-oxide-[protein] + a quinol. In terms of biological role, part of the MsrPQ system that repairs oxidized periplasmic proteins containing methionine sulfoxide residues (Met-O), using respiratory chain electrons. Thus protects these proteins from oxidative-stress damage caused by reactive species of oxygen and chlorine generated by the host defense mechanisms. MsrPQ is essential for the maintenance of envelope integrity under bleach stress, rescuing a wide series of structurally unrelated periplasmic proteins from methionine oxidation. The catalytic subunit MsrP is non-stereospecific, being able to reduce both (R-) and (S-) diastereoisomers of methionine sulfoxide. In Serratia proteamaculans (strain 568), this protein is Protein-methionine-sulfoxide reductase catalytic subunit MsrP.